We begin with the raw amino-acid sequence, 406 residues long: Subtilisin-like protease CPC735_023170 (406 aa).

The signal sequence occupies residues 1–20; the sequence is MRLFQSTCVLVGTVLPLFTA. Residues 21 to 118 constitute a propeptide that is removed on maturation; the sequence is FPISSPREIE…VEPDSMAYVT (98 aa). The Inhibitor I9 domain maps to 35 to 115; it reads KYIITFKKGI…VESVEPDSMA (81 aa). Residue Asn-125 is glycosylated (N-linked (GlcNAc...) asparagine). A Peptidase S8 domain is found at 127 to 406; that stretch reads TYGPRRISHR…NKLAYNGSGK (280 aa). Active-site charge relay system residues include Asp-161 and His-192. Asn-239 carries N-linked (GlcNAc...) asparagine glycosylation. The segment at 283-309 is disordered; the sequence is NDGRDAGRNSPGSAPESITVGSINSRR. Residue Asn-346 is glycosylated (N-linked (GlcNAc...) asparagine). Ser-351 serves as the catalytic Charge relay system. N-linked (GlcNAc...) asparagine glycosylation occurs at Asn-402.

The protein belongs to the peptidase S8 family.

The protein localises to the secreted. Functionally, secreted subtilisin-like serine protease with keratinolytic activity that contributes to pathogenicity. The chain is Subtilisin-like protease CPC735_023170 from Coccidioides posadasii (strain C735) (Valley fever fungus).